The following is a 429-amino-acid chain: Ribosomal RNA small subunit methyltransferase B (429 aa).

S-adenosyl-L-methionine contacts are provided by residues 254-260, Asp277, Asp303, and Asp322; that span reads CAAPGGK. Cys375 (nucleophile) is an active-site residue.

Belongs to the class I-like SAM-binding methyltransferase superfamily. RsmB/NOP family.

It is found in the cytoplasm. The enzyme catalyses cytidine(967) in 16S rRNA + S-adenosyl-L-methionine = 5-methylcytidine(967) in 16S rRNA + S-adenosyl-L-homocysteine + H(+). Specifically methylates the cytosine at position 967 (m5C967) of 16S rRNA. The sequence is that of Ribosomal RNA small subunit methyltransferase B from Erwinia tasmaniensis (strain DSM 17950 / CFBP 7177 / CIP 109463 / NCPPB 4357 / Et1/99).